Reading from the N-terminus, the 257-residue chain is RING1 and YY1-binding protein B (257 aa).

Disordered stretches follow at residues 1–24 and 45–257; these read MGDKKSPTRPKRQAKPTADNGFWD and RKGT…DESF. A RanBP2-type zinc finger spans residues 19–48; it reads DNGFWDCSVCTFRNSAEAFKCSICDVRKGT. Residues 74-129 show a composition bias toward basic and acidic residues; that stretch reads PKKEKKEKPERPEKDRAEEERPDINPPDEHPVEQRDKDKSEKEQPEKEKKDREKEI. The segment covering 149-168 has biased composition (polar residues); it reads HQSPPSERNSIQSGKSTTKT. Positions 169–178 are enriched in basic residues; the sequence is KNSHNSRPKL. A compositionally biased stretch (low complexity) spans 209–233; that stretch reads TSSTSSSTVTSSASSEQQHQSSGSE.

It localises to the nucleus. It is found in the cytoplasm. Its function is as follows. May be implicated in the regulation of the transcription as a repressor of the transcriptional activity of E4TF1. This chain is RING1 and YY1-binding protein B (rybpb), found in Danio rerio (Zebrafish).